We begin with the raw amino-acid sequence, 305 residues long: tRNA dimethylallyltransferase (305 aa).

Position 13–20 (13–20 (GPTSSGKT)) interacts with ATP. 15–20 (TSSGKT) provides a ligand contact to substrate. The interval 39 to 42 (DSKQ) is interaction with substrate tRNA.

This sequence belongs to the IPP transferase family. As to quaternary structure, monomer. Requires Mg(2+) as cofactor.

The catalysed reaction is adenosine(37) in tRNA + dimethylallyl diphosphate = N(6)-dimethylallyladenosine(37) in tRNA + diphosphate. In terms of biological role, catalyzes the transfer of a dimethylallyl group onto the adenine at position 37 in tRNAs that read codons beginning with uridine, leading to the formation of N6-(dimethylallyl)adenosine (i(6)A). This is tRNA dimethylallyltransferase from Neorickettsia sennetsu (strain ATCC VR-367 / Miyayama) (Ehrlichia sennetsu).